Reading from the N-terminus, the 410-residue chain is MGAVSCRQGQHTQQGEHTRVAVPHKQGGNIRGPWARGWKSLWTGLGTIRSDLEELWELRGHHYLHQESLKPAPVLVEKPLPEWPVPQFINLFLPEFPIRPIRGQQQLKILGLVAKGSFGTVLKVLDCTQKAVFAVKVVPKVKVLQRDTVRQCKEEVSIQRQINHPFVHSLGDSWQGKRHLFIMCSYCSTDLYSLWSAVGCFPEASIRLFAAELVLVLCYLHDLGIMHRDVKMENILLDERGHLKLTDFGLSRHVPQGAQAYTICGTLQYMAPEVLSGGPYNHAADWWSLGVLLFSLATGKFPVAAERDHVAMLASVTHSDSEIPASLNQGLSLLLHELLCQNPLHRLRYLHHFQVHPFFRGVAFDPELLQKQPVNFVTETQATQPSSAETMPFDDFDCDLESFLLYPIPA.

Positions 107 to 274 (LKILGLVAKG…GTLQYMAPEV (168 aa)) constitute a Protein kinase domain. ATP-binding positions include 113–121 (VAKGSFGTV) and lysine 136. Aspartate 229 acts as the Proton acceptor in catalysis.

Belongs to the protein kinase superfamily. Ser/Thr protein kinase family.

It catalyses the reaction L-seryl-[protein] + ATP = O-phospho-L-seryl-[protein] + ADP + H(+). The enzyme catalyses L-threonyl-[protein] + ATP = O-phospho-L-threonyl-[protein] + ADP + H(+). This is Ribosomal protein S6 kinase-related protein from Homo sapiens (Human).